We begin with the raw amino-acid sequence, 553 residues long: Transcriptional regulator HilA (553 aa).

A DNA-binding region (ompR/PhoB-type) is located at residues 11 to 107; that stretch reads NKKFVFDDFI…LYGQGYRFNR (97 aa). Residue aspartate 62 is modified to 4-aspartylphosphate. One copy of the TPR repeat lies at 372-405; that stretch reads ADIKYYYGWNLFMAGQLEEALQTINECLKLDPTR.

Functionally, the main transcriptional regulator of the Salmonella pathogenicity island 1 (SPI1) gene expression. Activates the expression of invasion genes by a direct action at their promoters and also indirectly by increasing the level of invF. Also binds upstream of prgH and directly activates the expression of prgHIJK operon. The protein is Transcriptional regulator HilA (hilA) of Salmonella typhi.